Here is a 448-residue protein sequence, read N- to C-terminus: DNA repair protein RadA (448 aa).

The segment at 10–27 (CQHCGFTSPKWLGKCVQC) adopts a C4-type zinc-finger fold. Residue 96 to 103 (GSPGVGKS) coordinates ATP. Positions 253 to 257 (KNRFG) match the RadA KNRFG motif motif. The interval 351–448 (DVFINVSGGI…NAVGKIVEWM (98 aa)) is lon-protease-like.

The protein belongs to the RecA family. RadA subfamily.

Its function is as follows. DNA-dependent ATPase involved in processing of recombination intermediates, plays a role in repairing DNA breaks. Stimulates the branch migration of RecA-mediated strand transfer reactions, allowing the 3' invading strand to extend heteroduplex DNA faster. Binds ssDNA in the presence of ADP but not other nucleotides, has ATPase activity that is stimulated by ssDNA and various branched DNA structures, but inhibited by SSB. Does not have RecA's homology-searching function. The sequence is that of DNA repair protein RadA from Helicobacter pylori (strain ATCC 700392 / 26695) (Campylobacter pylori).